The chain runs to 292 residues: uncharacterized protein (292 aa).

Catalysis depends on charge relay system residues serine 44 and tyrosine 106. Tyrosine 132 (proton donor) is an active-site residue. The active-site Schiff-base intermediate with substrate is lysine 161.

Belongs to the DapA family. In terms of assembly, homotetramer.

The protein resides in the cytoplasm. This is an uncharacterized protein from Thermoplasma acidophilum (strain ATCC 25905 / DSM 1728 / JCM 9062 / NBRC 15155 / AMRC-C165).